The chain runs to 323 residues: Aldo-keto reductase family 1 member C4 (323 aa).

Residues 20 to 24 (GFGSY) and D50 contribute to the NADP(+) site. The Proton donor role is filled by Y55. Position 117 (H117) interacts with substrate. NADP(+) contacts are provided by residues 166–167 (SN), Q190, 216–221 (HSALGT), and 270–280 (KSYNEQRIREN).

It belongs to the aldo/keto reductase family. In terms of assembly, monomer. In terms of tissue distribution, high expression in liver. Also expressed in kidney.

It is found in the cytoplasm. The protein localises to the cytosol. It catalyses the reaction chlordecone alcohol + NADP(+) = chlordecone + NADPH + H(+). The enzyme catalyses a 3alpha-hydroxysteroid + NADP(+) = a 3-oxosteroid + NADPH + H(+). The catalysed reaction is a 3alpha-hydroxysteroid + NAD(+) = a 3-oxosteroid + NADH + H(+). It carries out the reaction 5alpha-androstane-3alpha,17beta-diol + NADP(+) = 17beta-hydroxy-5alpha-androstan-3-one + NADPH + H(+). It catalyses the reaction 5alpha-androstane-3beta,17beta-diol + NADP(+) = 17beta-hydroxy-5alpha-androstan-3-one + NADPH + H(+). The enzyme catalyses 5alpha-androstane-3alpha,17beta-diol + NAD(+) = 17beta-hydroxy-5alpha-androstan-3-one + NADH + H(+). The catalysed reaction is 17beta-estradiol + NADP(+) = estrone + NADPH + H(+). It carries out the reaction 17beta-estradiol + NAD(+) = estrone + NADH + H(+). It catalyses the reaction (20S)-hydroxypregn-4-en-3-one + NADP(+) = progesterone + NADPH + H(+). The enzyme catalyses (20S)-hydroxypregn-4-en-3-one + NAD(+) = progesterone + NADH + H(+). The catalysed reaction is androsterone + NADP(+) = 5alpha-androstan-3,17-dione + NADPH + H(+). It carries out the reaction testosterone + NADP(+) = androst-4-ene-3,17-dione + NADPH + H(+). It catalyses the reaction testosterone + NAD(+) = androst-4-ene-3,17-dione + NADH + H(+). The enzyme catalyses 3alpha-hydroxy-5alpha-androstane 17-O-(beta-D-glucuronate) + NADP(+) = 5alpha-dihydrotestosterone 17-O-(beta-D-glucuronate) + NADPH + H(+). The catalysed reaction is (3beta,5alpha,17beta)-3-hydroxy-androstan-17-yl sulfate + NADP(+) = 5alpha-dihydrotestosterone sulfate + NADPH + H(+). It carries out the reaction 5alpha-androstane-3alpha,17beta-diol + NAD(+) = androsterone + NADH + H(+). Its pathway is steroid metabolism. Potently inhibited by benzbromarone, 3',3'',5',5''-tetrabromophenolphthalein (TBPP) and o-cresolphthalein. Functionally, cytosolic aldo-keto reductase that catalyzes the NADH and NADPH-dependent reduction of ketosteroids to hydroxysteroids. Liver specific enzyme that acts as an NAD(P)(H)-dependent 3-, 17- and 20-ketosteroid reductase on the steroid nucleus and side chain. Displays the ability to catalyze both oxidation and reduction in vitro, but most probably acts as a reductase in vivo since the oxidase activity measured in vitro is inhibited by physiological concentration of NADPH. Acts preferentially as a 3-alpha-hydroxysteroid dehydrogenase (HSD) with a subsidiary 3-beta-HSD activity. Catalyzes efficiently the transformation of the potent androgen 5-alpha-dihydrotestosterone (5alpha-DHT or 17beta-hydroxy-5alpha-androstan-3-one) into the less active form, 5-alpha-androstan-3-alpha,17-beta-diol (3-alpha-diol). Catalyzes the reduction of estrone into 17beta-estradiol but with low efficiency. Metabolizes a broad spectrum of natural and synthetic therapeutic steroid and plays an important role in metabolism of androgens, estrogens, progestereone and conjugated steroids. Catalyzes the biotransformation of the pesticide chlordecone (kepone) to its corresponding alcohol leading to increased biliary excretion of the pesticide and concomitant reduction of its neurotoxicity since bile is the major excretory route. This chain is Aldo-keto reductase family 1 member C4 (AKR1C4), found in Macaca fuscata fuscata (Japanese macaque).